A 395-amino-acid chain; its full sequence is Multidrug resistance protein MdtL (395 aa).

Residues 1–3 are Cytoplasmic-facing; the sequence is MKR. The chain crosses the membrane as a helical span at residues 4 to 24; the sequence is FLLCSFALVLLYPAGIDMYLV. The Periplasmic segment spans residues 25–41; sequence GLPRIAADLNASEAQLH. A helical transmembrane segment spans residues 42 to 62; sequence IAFSVYLAGMATAMLFAGKIA. Over 63 to 68 the chain is Cytoplasmic; the sequence is DQSGRK. The helical transmembrane segment at 69–89 threads the bilayer; it reads PVAIVGAIVFMMASLLCSRAS. Over 90 to 92 the chain is Periplasmic; the sequence is EGS. Residues 93 to 113 form a helical membrane-spanning segment; sequence LFLSGRFLQGVGAGGCYVVAF. The Cytoplasmic portion of the chain corresponds to 114-130; sequence AILRDTLDEHRRAKVLS. Residues 131-151 traverse the membrane as a helical segment; sequence LLNGITCIVPVLAPVMGHLIM. Topologically, residues 152-157 are periplasmic; sequence LRFPWQ. Residues 158-178 form a helical membrane-spanning segment; that stretch reads SLFYTMSTMGIMVGLLSLFIL. Over 179 to 216 the chain is Cytoplasmic; the sequence is RETRPARLAPRDLSPSSSAAESLVNRFFVSRLAITTLS. Residues 217–237 traverse the membrane as a helical segment; sequence VSVILTFVNASPVLLMEVMGF. Residues 238–246 lie on the Periplasmic side of the membrane; it reads SRGDYAITM. The helical transmembrane segment at 247–267 threads the bilayer; that stretch reads ALTAGVSMVVSFSTPFALGLF. The Cytoplasmic segment spans residues 268–270; it reads KPR. Residues 271–291 form a helical membrane-spanning segment; sequence TLMLVSQGLFLTAGVTLSLAH. Residues 292–294 are Periplasmic-facing; the sequence is TNT. Residues 295 to 315 form a helical membrane-spanning segment; the sequence is VTLFGLTLICAGFSVGFGVAM. Residues 316 to 332 are Cytoplasmic-facing; it reads SQALGPFSLRAGVASST. The chain crosses the membrane as a helical span at residues 333-353; sequence LGIAQVCGSSLWIWLAAILGI. The Periplasmic segment spans residues 354–357; that stretch reads SAMN. A helical transmembrane segment spans residues 358–378; the sequence is MLIGILIGCSIVSILLIFSVA. Topologically, residues 379–395 are cytoplasmic; that stretch reads PNRSVAEHEEIPYQSRS.

It belongs to the major facilitator superfamily. DHA1 family. MdtL (TC 2.A.1.2.22) subfamily.

It localises to the cell inner membrane. This chain is Multidrug resistance protein MdtL (mdtL), found in Salmonella typhi.